A 341-amino-acid chain; its full sequence is Glyceraldehyde-3-phosphate dehydrogenase 3 (341 aa).

NAD(+) contacts are provided by residues 13–14 (RI), Asp-35, and Arg-85. Residues 157–159 (SCT), Thr-188, 217–218 (TG), and Arg-240 each bind D-glyceraldehyde 3-phosphate. The active-site Nucleophile is Cys-158. Asn-322 is an NAD(+) binding site.

It belongs to the glyceraldehyde-3-phosphate dehydrogenase family. In terms of assembly, homotetramer.

It localises to the cytoplasm. It carries out the reaction D-glyceraldehyde 3-phosphate + phosphate + NAD(+) = (2R)-3-phospho-glyceroyl phosphate + NADH + H(+). Its pathway is carbohydrate degradation; glycolysis; pyruvate from D-glyceraldehyde 3-phosphate: step 1/5. In Caenorhabditis elegans, this protein is Glyceraldehyde-3-phosphate dehydrogenase 3 (gpd-3).